The following is a 211-amino-acid chain: Thymidylate kinase (211 aa).

7 to 14 (GIDASGKS) is a binding site for ATP.

Belongs to the thymidylate kinase family.

It carries out the reaction dTMP + ATP = dTDP + ADP. In terms of biological role, phosphorylation of dTMP to form dTDP in both de novo and salvage pathways of dTTP synthesis. The sequence is that of Thymidylate kinase from Mesomycoplasma hyopneumoniae (strain 232) (Mycoplasma hyopneumoniae).